The chain runs to 435 residues: Methylenetetrahydrofolate--tRNA-(uracil-5-)-methyltransferase TrmFO (435 aa).

7 to 12 (GAGLAG) lines the FAD pocket.

This sequence belongs to the MnmG family. TrmFO subfamily. FAD serves as cofactor.

It is found in the cytoplasm. The catalysed reaction is uridine(54) in tRNA + (6R)-5,10-methylene-5,6,7,8-tetrahydrofolate + NADH + H(+) = 5-methyluridine(54) in tRNA + (6S)-5,6,7,8-tetrahydrofolate + NAD(+). The enzyme catalyses uridine(54) in tRNA + (6R)-5,10-methylene-5,6,7,8-tetrahydrofolate + NADPH + H(+) = 5-methyluridine(54) in tRNA + (6S)-5,6,7,8-tetrahydrofolate + NADP(+). Its function is as follows. Catalyzes the folate-dependent formation of 5-methyl-uridine at position 54 (M-5-U54) in all tRNAs. This Thermotoga neapolitana (strain ATCC 49049 / DSM 4359 / NBRC 107923 / NS-E) protein is Methylenetetrahydrofolate--tRNA-(uracil-5-)-methyltransferase TrmFO.